We begin with the raw amino-acid sequence, 139 residues long: Small ribosomal subunit protein uS11 (139 aa).

Disordered stretches follow at residues 1–33 and 118–139; these read MPPAKKGPATSARKGQKTRRREKKNVPHGAAHI and GAISDVTPQPHNGVRPPKRRRV. Positions 14–23 are enriched in basic residues; it reads KGQKTRRREK.

This sequence belongs to the universal ribosomal protein uS11 family. As to quaternary structure, part of the 30S ribosomal subunit. Interacts with proteins S7 and S18. Binds to IF-3.

Functionally, located on the platform of the 30S subunit, it bridges several disparate RNA helices of the 16S rRNA. Forms part of the Shine-Dalgarno cleft in the 70S ribosome. The protein is Small ribosomal subunit protein uS11 of Mycobacterium tuberculosis (strain ATCC 25177 / H37Ra).